Consider the following 193-residue polypeptide: MEVDLLHFEKKYHNCIVAGIDEAGRGPLAGPVVASAVIVDNANIITGIKDSKKLSKKKRELLYEQITSNYVWATAIISHTEIDDINILEATKKACSIAVANLSLEPEIVLVDGNMQFKDERFVSIINGDNLSLSIAAASIVAKVTRDRLMLDLSAEFPQYLWHKNSGYGTKEHIEAINIYGLSPYHRRSFRCC.

Residues 15 to 193 (CIVAGIDEAG…PYHRRSFRCC (179 aa)) form the RNase H type-2 domain. A divalent metal cation contacts are provided by D21, E22, and D112.

It belongs to the RNase HII family. Mn(2+) is required as a cofactor. Mg(2+) serves as cofactor.

It is found in the cytoplasm. The catalysed reaction is Endonucleolytic cleavage to 5'-phosphomonoester.. Its function is as follows. Endonuclease that specifically degrades the RNA of RNA-DNA hybrids. The sequence is that of Ribonuclease HII from Rickettsia africae (strain ESF-5).